A 362-amino-acid polypeptide reads, in one-letter code: tRNA-specific 2-thiouridylase MnmA (362 aa).

Residues 9-16 (GMSGGVDS) and methionine 35 contribute to the ATP site. Residues 95–97 (NPD) form an interaction with target base in tRNA region. Cysteine 100 acts as the Nucleophile in catalysis. Cysteine 100 and cysteine 196 are oxidised to a cystine. Glycine 124 contacts ATP. Positions 146–148 (KDQ) are interaction with tRNA. Cysteine 196 serves as the catalytic Cysteine persulfide intermediate. The segment at 308–309 (RY) is interaction with tRNA.

Belongs to the MnmA/TRMU family.

The protein resides in the cytoplasm. It carries out the reaction S-sulfanyl-L-cysteinyl-[protein] + uridine(34) in tRNA + AH2 + ATP = 2-thiouridine(34) in tRNA + L-cysteinyl-[protein] + A + AMP + diphosphate + H(+). Its function is as follows. Catalyzes the 2-thiolation of uridine at the wobble position (U34) of tRNA, leading to the formation of s(2)U34. This is tRNA-specific 2-thiouridylase MnmA from Nitrosomonas europaea (strain ATCC 19718 / CIP 103999 / KCTC 2705 / NBRC 14298).